The primary structure comprises 550 residues: Tether containing UBX domain for GLUT4 (550 aa).

At alanine 2 the chain carries N-acetylalanine. The disordered stretch occupies residues 185 to 320 (AVRSKAPGSP…EPPVDRDPVV (136 aa)). Residue serine 193 is modified to Phosphoserine. Residues 193–206 (SPVSSLSADQASSS) are compositionally biased toward low complexity. The segment covering 217-226 (SRGDLNHEGD) has biased composition (basic and acidic residues). Residues 242–252 (DAQTKQSTSEP) show a composition bias toward polar residues. Residues 313–376 (PVDRDPVVYH…LVTKAFREAQ (64 aa)) are interaction with GLUT4. Residues 382–458 (ERYPKVALRV…NLFPAALVHF (77 aa)) form the UBX domain. Serine 496 is modified (phosphoserine). The tract at residues 496–550 (SPPLLPAPDPVSLESEPIAEDGALGPPEPIQGTAQPVKRSLGKVPKWLKLPASKR) is disordered.

In terms of assembly, interacts with VCP. Interacts with VCPKMT. Interacts with GLUT4. Ubiquitous.

The protein resides in the endomembrane system. The protein localises to the endoplasmic reticulum-Golgi intermediate compartment membrane. It localises to the cytoplasm. Its subcellular location is the nucleus. Functionally, enhances VCP methylation catalyzed by VCPKMT. Tethering protein that sequesters GLUT4-containing vesicles in the cytoplasm in the absence of insulin. Modulates the amount of GLUT4 that is available at the cell surface. This is Tether containing UBX domain for GLUT4 (Aspscr1) from Mus musculus (Mouse).